The sequence spans 466 residues: UDP-N-acetylmuramoylalanine--D-glutamate ligase (466 aa).

124–130 contributes to the ATP binding site; sequence GSDGKTT.

This sequence belongs to the MurCDEF family.

It is found in the cytoplasm. It catalyses the reaction UDP-N-acetyl-alpha-D-muramoyl-L-alanine + D-glutamate + ATP = UDP-N-acetyl-alpha-D-muramoyl-L-alanyl-D-glutamate + ADP + phosphate + H(+). It participates in cell wall biogenesis; peptidoglycan biosynthesis. Cell wall formation. Catalyzes the addition of glutamate to the nucleotide precursor UDP-N-acetylmuramoyl-L-alanine (UMA). The chain is UDP-N-acetylmuramoylalanine--D-glutamate ligase from Acetivibrio thermocellus (strain ATCC 27405 / DSM 1237 / JCM 9322 / NBRC 103400 / NCIMB 10682 / NRRL B-4536 / VPI 7372) (Clostridium thermocellum).